The following is a 314-amino-acid chain: Small ribosomal subunit biogenesis GTPase RsgA (314 aa).

Residues 78–238 form the CP-type G domain; it reads SEIFREKLIA…IIDSPGFQEF (161 aa). GTP-binding positions include 127–130 and 180–188; these read NKID and GQSGVGKST. 4 residues coordinate Zn(2+): cysteine 262, cysteine 267, histidine 269, and cysteine 275.

It belongs to the TRAFAC class YlqF/YawG GTPase family. RsgA subfamily. As to quaternary structure, monomer. Associates with 30S ribosomal subunit, binds 16S rRNA. Zn(2+) serves as cofactor.

The protein resides in the cytoplasm. In terms of biological role, one of several proteins that assist in the late maturation steps of the functional core of the 30S ribosomal subunit. Helps release RbfA from mature subunits. May play a role in the assembly of ribosomal proteins into the subunit. Circularly permuted GTPase that catalyzes slow GTP hydrolysis, GTPase activity is stimulated by the 30S ribosomal subunit. This is Small ribosomal subunit biogenesis GTPase RsgA from Nitrosomonas europaea (strain ATCC 19718 / CIP 103999 / KCTC 2705 / NBRC 14298).